Consider the following 359-residue polypeptide: Phosphate acyltransferase (359 aa).

The interval 335-359 is disordered; the sequence is SGAGGAATGSPETDAPNPHPDSRAA.

The protein belongs to the PlsX family. As to quaternary structure, homodimer. Probably interacts with PlsY.

It localises to the cytoplasm. The enzyme catalyses a fatty acyl-[ACP] + phosphate = an acyl phosphate + holo-[ACP]. The protein operates within lipid metabolism; phospholipid metabolism. Functionally, catalyzes the reversible formation of acyl-phosphate (acyl-PO(4)) from acyl-[acyl-carrier-protein] (acyl-ACP). This enzyme utilizes acyl-ACP as fatty acyl donor, but not acyl-CoA. The protein is Phosphate acyltransferase of Cupriavidus metallidurans (strain ATCC 43123 / DSM 2839 / NBRC 102507 / CH34) (Ralstonia metallidurans).